The sequence spans 1885 residues: Fatty acid synthase subunit alpha (1885 aa).

Basic and acidic residues predominate over residues 92 to 107; sequence PDPADLAPKETPKQEE. Residues 92 to 140 are disordered; that stretch reads PDPADLAPKETPKQEESTPSAPAAATPTPAAAAAPTPAPAPASAGPVES. Residues 108 to 126 show a composition bias toward low complexity; the sequence is STPSAPAAATPTPAAAAAP. Positions 146 to 221 constitute a Carrier domain; the sequence is VKANLLIHVL…EQFQDSFSGQ (76 aa). Serine 181 carries the post-translational modification O-(pantetheine 4'-phosphoryl)serine. A Ketosynthase family 3 (KS3) domain is found at 1121–1661; the sequence is IQEIVVQHDL…QKGAQAVVVH (541 aa). Catalysis depends on for beta-ketoacyl synthase activity residues cysteine 1304, histidine 1546, and histidine 1587. The Mg(2+) site is built by aspartate 1771, valine 1772, and glutamate 1773. Residues 1771 to 1773, tyrosine 1797, serine 1807, 1816 to 1826, 1840 to 1843, and 1870 to 1872 contribute to the acetyl-CoA site; these read DVE, EAVFKALGVES, RDVN, and ISH. Mg(2+) contacts are provided by serine 1871 and histidine 1872.

Belongs to the thiolase-like superfamily. Fungal fatty acid synthetase subunit alpha family. In terms of assembly, [Alpha(6)beta(6)] hexamers of two multifunctional subunits (alpha and beta).

The catalysed reaction is acetyl-CoA + n malonyl-CoA + 2n NADPH + 4n H(+) = a long-chain-acyl-CoA + n CoA + n CO2 + 2n NADP(+).. The enzyme catalyses a fatty acyl-[ACP] + malonyl-[ACP] + H(+) = a 3-oxoacyl-[ACP] + holo-[ACP] + CO2. It catalyses the reaction a (3R)-hydroxyacyl-[ACP] + NADP(+) = a 3-oxoacyl-[ACP] + NADPH + H(+). Its function is as follows. Fatty acid synthetase catalyzes the formation of long-chain fatty acids from acetyl-CoA, malonyl-CoA and NADPH. The alpha subunit contains domains for: acyl carrier protein, 3-oxoacyl-[acyl-carrier-protein] reductase, and 3-oxoacyl-[acyl-carrier-protein] synthase. This Candida albicans (Yeast) protein is Fatty acid synthase subunit alpha (FAS2).